We begin with the raw amino-acid sequence, 314 residues long: Carbamate kinase (314 aa).

The protein belongs to the carbamate kinase family.

The protein resides in the cytoplasm. It carries out the reaction hydrogencarbonate + NH4(+) + ATP = carbamoyl phosphate + ADP + H2O + H(+). It functions in the pathway metabolic intermediate metabolism; carbamoyl phosphate degradation; CO(2) and NH(3) from carbamoyl phosphate: step 1/1. The protein is Carbamate kinase (arcC) of Latilactobacillus sakei (Lactobacillus sakei).